The following is a 259-amino-acid chain: UPF0246 protein VF_2109 (259 aa).

It belongs to the UPF0246 family.

This chain is UPF0246 protein VF_2109, found in Aliivibrio fischeri (strain ATCC 700601 / ES114) (Vibrio fischeri).